The following is a 413-amino-acid chain: Serine hydroxymethyltransferase (413 aa).

(6S)-5,6,7,8-tetrahydrofolate contacts are provided by residues Leu-117 and 121 to 123; that span reads GHL. Lys-226 bears the N6-(pyridoxal phosphate)lysine mark. 349 to 351 serves as a coordination point for (6S)-5,6,7,8-tetrahydrofolate; that stretch reads SPF.

The protein belongs to the SHMT family. In terms of assembly, homodimer. Pyridoxal 5'-phosphate is required as a cofactor.

The protein resides in the cytoplasm. The catalysed reaction is (6R)-5,10-methylene-5,6,7,8-tetrahydrofolate + glycine + H2O = (6S)-5,6,7,8-tetrahydrofolate + L-serine. It functions in the pathway one-carbon metabolism; tetrahydrofolate interconversion. It participates in amino-acid biosynthesis; glycine biosynthesis; glycine from L-serine: step 1/1. Functionally, catalyzes the reversible interconversion of serine and glycine with tetrahydrofolate (THF) serving as the one-carbon carrier. This reaction serves as the major source of one-carbon groups required for the biosynthesis of purines, thymidylate, methionine, and other important biomolecules. Also exhibits THF-independent aldolase activity toward beta-hydroxyamino acids, producing glycine and aldehydes, via a retro-aldol mechanism. In Listeria monocytogenes serotype 4b (strain F2365), this protein is Serine hydroxymethyltransferase.